Here is a 539-residue protein sequence, read N- to C-terminus: DNA damage-binding protein CMR1 (539 aa).

Residues L22–S89 form a disordered region. Residues E27–P39 show a composition bias toward basic and acidic residues. 6 WD repeats span residues V182 to Q223, L226 to D268, L316 to T356, N377 to L415, G462 to L505, and A508 to E539.

This sequence belongs to the WD repeat DDB2/WDR76 family.

DNA-binding protein that binds to both single- and double-stranded DNA. Binds preferentially to UV-damaged DNA. May be involved in DNA-metabolic processes. This chain is DNA damage-binding protein CMR1, found in Yarrowia lipolytica (strain CLIB 122 / E 150) (Yeast).